The following is a 235-amino-acid chain: MKYKKVVEGIFLKRPNRFIAQVLIDGQEETVHVKNTGRCRELLIPGVKVLLEDGRDNPNRKTKYSLISVWKGDMLINMDSQAPNAAAFTAIKENRVKEIQSLTHLKREVTFGKSRFDLYFETLNNGTLQKGFIEVKGVTLENEGICMFPDAPTERGTKHVLEMVEAVKQGYRGILLFVIQMKGPNLFKLNWEMDRAFSQAVQFASENGVEVLAYDAVIEKDEIILGDRVDIDYRA.

The protein belongs to the SfsA family.

The sequence is that of Sugar fermentation stimulation protein homolog from Alkaliphilus oremlandii (strain OhILAs) (Clostridium oremlandii (strain OhILAs)).